Here is a 362-residue protein sequence, read N- to C-terminus: Protein RecA (362 aa).

An ATP-binding site is contributed by 77-84; the sequence is GPESSGKT.

It belongs to the RecA family.

The protein localises to the cytoplasm. In terms of biological role, can catalyze the hydrolysis of ATP in the presence of single-stranded DNA, the ATP-dependent uptake of single-stranded DNA by duplex DNA, and the ATP-dependent hybridization of homologous single-stranded DNAs. It interacts with LexA causing its activation and leading to its autocatalytic cleavage. The chain is Protein RecA from Nitrobacter winogradskyi (strain ATCC 25391 / DSM 10237 / CIP 104748 / NCIMB 11846 / Nb-255).